Consider the following 104-residue polypeptide: Inner membrane protein YjeO (104 aa).

The Cytoplasmic segment spans residues 1–5; that stretch reads MSARM. Residues 6 to 26 traverse the membrane as a helical segment; sequence FVLCCIWFIVAFLWITITSAL. Residues 27–52 are Periplasmic-facing; it reads DKEWMIDGRGINNVCDVLMYLEEDDT. Residues 53–73 form a helical membrane-spanning segment; it reads RDVGVIMTLPLFFPFLWFALW. The Cytoplasmic segment spans residues 74 to 77; sequence RKKR. Residues 78-98 traverse the membrane as a helical segment; it reads GWFMYATALAIFGYWLWQFFL. Residues 99 to 104 are Periplasmic-facing; the sequence is RYQFCL.

It localises to the cell inner membrane. In Escherichia coli (strain K12), this protein is Inner membrane protein YjeO (yjeO).